A 396-amino-acid polypeptide reads, in one-letter code: Putative pyridoxal phosphate-dependent acyltransferase (396 aa).

111–112 (GF) provides a ligand contact to pyridoxal 5'-phosphate. His-136 provides a ligand contact to substrate. Pyridoxal 5'-phosphate-binding positions include Ser-186, 211–214 (DDAH), and 241–244 (TLSK). Lys-244 bears the N6-(pyridoxal phosphate)lysine mark. Thr-358 serves as a coordination point for substrate.

The protein belongs to the class-II pyridoxal-phosphate-dependent aminotransferase family. As to quaternary structure, homodimer. The cofactor is pyridoxal 5'-phosphate.

This is Putative pyridoxal phosphate-dependent acyltransferase from Bacillus anthracis.